The sequence spans 417 residues: Serine hydroxymethyltransferase (417 aa).

(6S)-5,6,7,8-tetrahydrofolate-binding positions include leucine 121 and 125–127; that span reads GHL. Position 229 is an N6-(pyridoxal phosphate)lysine (lysine 229). 355–357 contributes to the (6S)-5,6,7,8-tetrahydrofolate binding site; it reads SPF.

The protein belongs to the SHMT family. Homodimer. The cofactor is pyridoxal 5'-phosphate.

It localises to the cytoplasm. The catalysed reaction is (6R)-5,10-methylene-5,6,7,8-tetrahydrofolate + glycine + H2O = (6S)-5,6,7,8-tetrahydrofolate + L-serine. It functions in the pathway one-carbon metabolism; tetrahydrofolate interconversion. Its pathway is amino-acid biosynthesis; glycine biosynthesis; glycine from L-serine: step 1/1. In terms of biological role, catalyzes the reversible interconversion of serine and glycine with tetrahydrofolate (THF) serving as the one-carbon carrier. This reaction serves as the major source of one-carbon groups required for the biosynthesis of purines, thymidylate, methionine, and other important biomolecules. Also exhibits THF-independent aldolase activity toward beta-hydroxyamino acids, producing glycine and aldehydes, via a retro-aldol mechanism. The sequence is that of Serine hydroxymethyltransferase from Xylella fastidiosa (strain M12).